We begin with the raw amino-acid sequence, 653 residues long: Amyloid beta A4 precursor protein-binding family B member 1-interacting protein (653 aa).

Residues 82–141 are disordered; it reads NNKSTAPFPPADASNSYHFHPPPMPSIITEDLSLLPPPPEFDPHYPPPPPDPLTEPKTQE. The segment covering 116–134 has biased composition (pro residues); sequence LPPPPEFDPHYPPPPPDPL. Residues 165 to 253 form the Ras-associating domain; it reads KKRIVKVHMI…IHFLEKNEKY (89 aa). Residues 295–404 form the PH domain; that stretch reads VPELEAALYL…WVTGIRIAKY (110 aa). Residues 462–481 are compositionally biased toward basic and acidic residues; the sequence is KHGEANKQEKKSSEVNKPET. The segment at 462–653 is disordered; sequence KHGEANKQEK…ALQKKREPPT (192 aa). The span at 585-604 shows a compositional bias: pro residues; that stretch reads PAPPPPPPPPAPAANVPPLP. A compositionally biased stretch (basic residues) spans 605-614; the sequence is VKKHPPKPPK.

This sequence belongs to the MRL family.

The protein localises to the cell membrane. It localises to the cytoplasm. Its subcellular location is the cytoskeleton. Its function is as follows. Appears to function in the signal transduction from Ras activation to actin cytoskeletal remodeling. The protein is Amyloid beta A4 precursor protein-binding family B member 1-interacting protein (apbb1ip) of Xenopus laevis (African clawed frog).